Here is a 78-residue protein sequence, read N- to C-terminus: MFKTINKSITSILLLLISFYQKWFSPFFGPRCRFIPSCSSYGYEAITRHGPWKGGWLTLKRLSRCHPLTPCGCDPVPD.

The protein belongs to the UPF0161 family.

The protein resides in the cell inner membrane. Could be involved in insertion of integral membrane proteins into the membrane. The protein is Putative membrane protein insertion efficiency factor of Prochlorococcus marinus (strain MIT 9301).